A 192-amino-acid chain; its full sequence is Ras-like GTP-binding protein rhoA (192 aa).

A GTP-binding site is contributed by 12 to 19; it reads GDGACGKT. The Effector region motif lies at 34-42; the sequence is YVPTVFENY. GTP is bound by residues 59-63 and 117-120; these read DTAGQ and NKRD. Cys189 bears the Cysteine methyl ester mark. The S-geranylgeranyl cysteine moiety is linked to residue Cys189. Residues 190–192 constitute a propeptide, removed in mature form; it reads MIL.

Belongs to the small GTPase superfamily. Rho family. As to quaternary structure, may interact with unc-89 (via DN and PH domains). Interacts with bli-3 and memo-1. As to expression, in larvae and adults, enriched at the tip of the head where the anterior sensory organ is located and in the pharyngeal nerve ring (at protein level). In embryos, enriched at the boundaries of dorsal cells undergoing intercalation, ventral enclosure and elongation.

Its subcellular location is the cell membrane. The protein resides in the cytoplasm. The protein localises to the cytoskeleton. It localises to the cell cortex. GTP hydrolysis is stimulated by unc-89. Its function is as follows. Required for ventral migration of epidermal cells during ventral enclosure in the embryo and for cell elongation. Also required for ventral migration of P cells during larval development. Involved in asymmetric spindle positioning during anaphase and establishment of cell polarity during embryo development. In adults, involved in regulation of multiple processes including locomotion, pharyngeal pumping, fecundity, ovulation, defecation and body morphology. In body wall muscles, regulates organization of myosin thick filaments downstream of unc-89. Association with the oxidase bli-3 promotes ROS production and this interaction may be modulated by memo-1, in order to control the oxidative stress response and longevity. The chain is Ras-like GTP-binding protein rhoA from Caenorhabditis elegans.